Reading from the N-terminus, the 251-residue chain is uncharacterized protein (251 aa).

The N-terminal stretch at 1–18 (MRILIILSIILCSLSIRA) is a signal peptide.

The protein belongs to the MlaA family.

This is an uncharacterized protein from Rickettsia conorii (strain ATCC VR-613 / Malish 7).